The primary structure comprises 701 residues: Polyribonucleotide nucleotidyltransferase (701 aa).

Residues D487 and D493 each coordinate Mg(2+). The KH domain occupies 554–613 (PTMIAMKIDTDKIRDVIGKGGATIRAICEETKASIDIEDDGSIKIFGESKEAAEAARQRV). Positions 623-691 (GKIYLGKVER…NRGRIKLSIK (69 aa)) constitute an S1 motif domain.

It belongs to the polyribonucleotide nucleotidyltransferase family. In terms of assembly, component of the RNA degradosome, which is a multiprotein complex involved in RNA processing and mRNA degradation. Mg(2+) is required as a cofactor.

The protein resides in the cytoplasm. It catalyses the reaction RNA(n+1) + phosphate = RNA(n) + a ribonucleoside 5'-diphosphate. Functionally, involved in mRNA degradation. Catalyzes the phosphorolysis of single-stranded polyribonucleotides processively in the 3'- to 5'-direction. The chain is Polyribonucleotide nucleotidyltransferase from Pseudomonas syringae pv. tomato (strain ATCC BAA-871 / DC3000).